The sequence spans 34 residues: Beta-theraphotoxin-Pmu1a (34 aa).

3 cysteine pairs are disulfide-bonded: C3–C18, C10–C23, and C17–C30. L34 is modified (leucine amide).

The protein belongs to the neurotoxin 10 (Hwtx-1) family. 34 (Jztx-26) subfamily. Expressed by the venom gland.

It is found in the secreted. Spider venom neurotoxin that blocks voltage-gated sodium channels Nav1.3/SCN3A and Nav1.8/SCN10A in human (IC(50)=2 uM and IC(50)=4 uM, respectively) and rat (IC(50)=2 uM and IC(50)=2.5 uM, respectively). This is Beta-theraphotoxin-Pmu1a from Pterinochilus murinus (Mombasa golden starburst baboon spider).